We begin with the raw amino-acid sequence, 483 residues long: Cysteine--tRNA ligase (483 aa).

Cys28 provides a ligand contact to Zn(2+). Positions Met30–His40 match the 'HIGH' region motif. Cys212, His237, and Glu241 together coordinate Zn(2+). Positions Lys269–Ser273 match the 'KMSKS' region motif. Lys272 is an ATP binding site.

It belongs to the class-I aminoacyl-tRNA synthetase family. As to quaternary structure, monomer. The cofactor is Zn(2+).

It localises to the cytoplasm. The catalysed reaction is tRNA(Cys) + L-cysteine + ATP = L-cysteinyl-tRNA(Cys) + AMP + diphosphate. The protein is Cysteine--tRNA ligase of Bordetella avium (strain 197N).